Consider the following 855-residue polypeptide: Probable inactive ATP-dependent zinc metalloprotease FTSHI 4, chloroplastic (855 aa).

The transit peptide at 1 to 78 (MTFYISSSLT…SFESTESSVS (78 aa)) directs the protein to the chloroplast. A helical transmembrane segment spans residues 242 to 262 (VATFVVWSMRLALFVSLYVWI). Residue 356–363 (GPPGTGKT) coordinates ATP.

Belongs to the AAA ATPase family. As to quaternary structure, homooligomer. Interacts with FtsHi2. As to expression, ubiquitous but preferentially expressed in young leaves.

Its subcellular location is the plastid. The protein resides in the chloroplast thylakoid membrane. Functionally, functions in chloroplast biogenesis and chloroplast division. Required for plastid development during embryogenesis. Might be involved in chaperone functions or play a structural role in the thylakoid FtsH complex. This Arabidopsis thaliana (Mouse-ear cress) protein is Probable inactive ATP-dependent zinc metalloprotease FTSHI 4, chloroplastic.